The chain runs to 431 residues: Histidine--tRNA ligase (431 aa).

It belongs to the class-II aminoacyl-tRNA synthetase family. In terms of assembly, homodimer.

It is found in the cytoplasm. The catalysed reaction is tRNA(His) + L-histidine + ATP = L-histidyl-tRNA(His) + AMP + diphosphate + H(+). In Neisseria meningitidis serogroup C / serotype 2a (strain ATCC 700532 / DSM 15464 / FAM18), this protein is Histidine--tRNA ligase.